Here is a 310-residue protein sequence, read N- to C-terminus: 5'-adenylylsulfate reductase-like 4 (310 aa).

A signal peptide spans 1–22; the sequence is MEKEILLLLLVIMFLTVADVDA. The Thioredoxin domain occupies 49 to 168; sequence GVESDERPRF…LVAFYSDVTG (120 aa). Residues Asn143 and Asn190 are each glycosylated (N-linked (GlcNAc...) asparagine). Residues 217-237 form a helical membrane-spanning segment; it reads LAIVFVLLRLLHLIYPTLVVF.

The protein resides in the membrane. The polypeptide is 5'-adenylylsulfate reductase-like 4 (APRL4) (Arabidopsis thaliana (Mouse-ear cress)).